Reading from the N-terminus, the 35-residue chain is N-acylglucosamine 2-epimerase (35 aa).

Residues 1-21 (LNLVDQLGEADEELAGTYAEL) form a leucine-zipper region.

It belongs to the N-acylglucosamine 2-epimerase family. In terms of assembly, homodimer. Forms a heterodimer with renin and inhibits its activity.

It catalyses the reaction an N-acyl-D-glucosamine = an N-acyl-D-mannosamine. Its pathway is amino-sugar metabolism; N-acetylneuraminate degradation. Catalyzes the interconversion of N-acetylglucosamine to N-acetylmannosamine. Involved in the N-glycolylneuraminic acid (Neu5Gc) degradation pathway. The polypeptide is N-acylglucosamine 2-epimerase (Canis lupus familiaris (Dog)).